We begin with the raw amino-acid sequence, 209 residues long: ATP-dependent dethiobiotin synthetase BioD (209 aa).

Residue 13–18 (DIGKTV) coordinates ATP. Residue threonine 17 coordinates Mg(2+). Lysine 33 is an active-site residue. Positions 47 and 100 each coordinate Mg(2+). ATP contacts are provided by residues 100–103 (EGAG) and 184–186 (PRL).

It belongs to the dethiobiotin synthetase family. Homodimer. Requires Mg(2+) as cofactor.

The protein resides in the cytoplasm. The enzyme catalyses (7R,8S)-7,8-diammoniononanoate + CO2 + ATP = (4R,5S)-dethiobiotin + ADP + phosphate + 3 H(+). The protein operates within cofactor biosynthesis; biotin biosynthesis; biotin from 7,8-diaminononanoate: step 1/2. Its function is as follows. Catalyzes a mechanistically unusual reaction, the ATP-dependent insertion of CO2 between the N7 and N8 nitrogen atoms of 7,8-diaminopelargonic acid (DAPA, also called 7,8-diammoniononanoate) to form a ureido ring. This Rhodopseudomonas palustris (strain BisB18) protein is ATP-dependent dethiobiotin synthetase BioD.